Reading from the N-terminus, the 211-residue chain is Large ribosomal subunit protein uL4 (211 aa).

Polar residues predominate over residues 41 to 53; it reads QAHSRQGTASTLT. The segment at 41–78 is disordered; sequence QAHSRQGTASTLTRAEVRGGGRKPYKQKGTGRARQGTI. Over residues 60-71 the composition is skewed to basic residues; the sequence is GGRKPYKQKGTG.

This sequence belongs to the universal ribosomal protein uL4 family. Part of the 50S ribosomal subunit.

In terms of biological role, one of the primary rRNA binding proteins, this protein initially binds near the 5'-end of the 23S rRNA. It is important during the early stages of 50S assembly. It makes multiple contacts with different domains of the 23S rRNA in the assembled 50S subunit and ribosome. Functionally, forms part of the polypeptide exit tunnel. The sequence is that of Large ribosomal subunit protein uL4 from Prochlorococcus marinus (strain MIT 9303).